A 437-amino-acid polypeptide reads, in one-letter code: Aspartic proteinase nepenthesin-1 (437 aa).

The first 24 residues, 1 to 24, serve as a signal peptide directing secretion; it reads MASSLYSFLLALSIVYIFVAPTHS. The propeptide at 25–78 is activation peptide; it reads TSRTALNHRHEAKVTGFQIMLEHVDSGKNLTKFQLLERAIERGSRRLQRLEAML. 2 N-linked (GlcNAc...) asparagine glycosylation sites follow: N53 and N98. The Peptidase A1 domain maps to 95 to 430; that stretch reads YLMNLSIGTP…DTGNSVVSFA (336 aa). D113 is a catalytic residue. 6 disulfide bridges follow: C123/C126, C129/C203, C150/C168, C155/C163, C240/C434, and C354/C395. The N-linked (GlcNAc...) asparagine glycan is linked to N131. 3 N-linked (GlcNAc...) asparagine glycosylation sites follow: N198, N267, and N307. Residue D315 is part of the active site. Residue N345 is glycosylated (N-linked (GlcNAc...) asparagine).

This sequence belongs to the peptidase A1 family.

Its subcellular location is the secreted. The catalysed reaction is Similar to pepsin, but also cleaves on either side of Asp and at Lys-|-Arg.. Inhibited by pepstatin and by diazoacetyl-D,L-norleucine methyl ester (DAN) in the presence of Cu(2+) ions. Its function is as follows. Extracellular proteinase found in the pitcher fluid of carnivorous plants. Digest prey for nitrogen uptake. In Nepenthes gracilis (Slender pitcher plant), this protein is Aspartic proteinase nepenthesin-1 (nep1).